The chain runs to 494 residues: Rho GTPase-activating protein 19 (494 aa).

Ala-2 bears the N-acetylalanine mark. 2 positions are modified to phosphoserine: Ser-7 and Ser-31. The 207-residue stretch at 102–308 folds into the Rho-GAP domain; it reads MSLKRKEKGV…FMIKHSQKLF (207 aa). Disordered regions lie at residues 349 to 368 and 399 to 421; these read KSQK…TQHH and QSLT…ARSR. A compositionally biased stretch (basic and acidic residues) spans 354–368; that stretch reads NRVDSCPHQEETQHH. Residues 399–415 show a composition bias toward polar residues; it reads QSLTQTPGREPSTSQVQ. Phosphoserine occurs at positions 422, 438, and 470. At Thr-478 the chain carries Phosphothreonine.

As to expression, strong expression in fetal heart, brain, placenta, lung, liver, skeletal muscle, kidney and pancreas. Weak expression in adult pancreas, spleen, thymus, and ovary.

It is found in the nucleus. In terms of biological role, GTPase activator for the Rho-type GTPases by converting them to an inactive GDP-bound state. The polypeptide is Rho GTPase-activating protein 19 (ARHGAP19) (Homo sapiens (Human)).